The sequence spans 433 residues: Indole diterpene prenyltransferase terF (433 aa).

It belongs to the tryptophan dimethylallyltransferase family.

Its pathway is secondary metabolite biosynthesis. Indole diterpene prenyltransferase; part of the gene cluster that mediates the biosynthesis of terpendoles, indole-diterpene (IDT) mycotoxins including terpendole I, terpendole K, terpendole C, as well as the kinesin Eg5 inhibitor terpendole E. Terpendoles biosynthesis begins with the synthesis of geranylgeranyl diphosphate (GGPP) by a yet unidentified GGPP synthase. Condensation of indole-3-glycerol phosphate with GGPP by the prenyltransferase terC then forms 3-geranylgeranylindole (3-GGI), followed by epoxidation and cyclization of this intermediate (by the FAD-dependent monooxygeanse terM and the terpene cyclase terB) to form paspaline. The cytochrome monooxygenase terQ then hydroxylates paspalline at C-11 to yield terpendole E. The cytochrome monooxygenase terP converts terpendole E to 13-desoxyterpendole I, and terQ converts 13-desoxyterpendole I into terpendole I. TerF and terK are required for conversion of terpendole I to terpendole C which is further converted to terpendole K. This is Indole diterpene prenyltransferase terF from Tolypocladium album (Soil fungus).